The primary structure comprises 107 residues: Nucleoid-associated protein Xfasm12_1216 (107 aa).

This sequence belongs to the YbaB/EbfC family. In terms of assembly, homodimer.

It is found in the cytoplasm. The protein resides in the nucleoid. Binds to DNA and alters its conformation. May be involved in regulation of gene expression, nucleoid organization and DNA protection. The polypeptide is Nucleoid-associated protein Xfasm12_1216 (Xylella fastidiosa (strain M12)).